Reading from the N-terminus, the 339-residue chain is Methionine synthase (339 aa).

Residues histidine 212, cysteine 214, and cysteine 295 each coordinate Zn(2+).

Belongs to the archaeal MetE family. It depends on Zn(2+) as a cofactor.

It functions in the pathway amino-acid biosynthesis; L-methionine biosynthesis via de novo pathway. In terms of biological role, catalyzes the transfer of a methyl group to L-homocysteine resulting in methionine formation. The physiological methyl donor is unknown. This Sulfolobus acidocaldarius (strain ATCC 33909 / DSM 639 / JCM 8929 / NBRC 15157 / NCIMB 11770) protein is Methionine synthase.